Reading from the N-terminus, the 380-residue chain is D-alanine--D-alanine ligase (380 aa).

One can recognise an ATP-grasp domain in the interval Lys142–Glu348. Position 172 to 227 (Gln172 to Val227) interacts with ATP. The Mg(2+) site is built by Asp302, Glu315, and Asn317.

It belongs to the D-alanine--D-alanine ligase family. Mg(2+) is required as a cofactor. Mn(2+) serves as cofactor.

It is found in the cytoplasm. The catalysed reaction is 2 D-alanine + ATP = D-alanyl-D-alanine + ADP + phosphate + H(+). It participates in cell wall biogenesis; peptidoglycan biosynthesis. Functionally, cell wall formation. The chain is D-alanine--D-alanine ligase from Levilactobacillus brevis (strain ATCC 367 / BCRC 12310 / CIP 105137 / JCM 1170 / LMG 11437 / NCIMB 947 / NCTC 947) (Lactobacillus brevis).